Here is a 160-residue protein sequence, read N- to C-terminus: Protein YpjC (160 aa).

This is Protein YpjC (ypjC) from Escherichia coli (strain K12).